The primary structure comprises 367 residues: Probable sugar phosphate/phosphate translocator At1g48230 (367 aa).

10 helical membrane-spanning segments follow: residues 9–29, 43–63, 76–96, 106–126, 140–160, 163–183, 193–213, 229–249, 257–276, and 280–302; these read LVLTYIYLLIYIILSSGVILY, LPITLTMIHMGFSGFVAFLLI, FEIYVTCVVPISAFFASSLWF, VAFIQMLKALMPVATFLMAVV, MVLVSVGVVVSSYGEINFNVI, VYQVMGIFAEALRLVLTQVLL, VTSLYYIAPCSFVFLSLPWYV, WIFFSNALCALALNFSIFLVI, IRVAGVLKDWILIALSTVIF, and TITGLNITGYAIALCGVVMYNYI. The span at 321 to 330 shows a compositional bias: basic and acidic residues; sequence ITKDWKEKNS. Positions 321 to 341 are disordered; the sequence is ITKDWKEKNSSDGGSPRGLEL.

It belongs to the TPT transporter family. TPT (TC 2.A.7.9) subfamily.

It localises to the membrane. This chain is Probable sugar phosphate/phosphate translocator At1g48230, found in Arabidopsis thaliana (Mouse-ear cress).